A 223-amino-acid polypeptide reads, in one-letter code: Adapter protein MecA (223 aa).

The protein belongs to the MecA family. In terms of assembly, homodimer.

In terms of biological role, enables the recognition and targeting of unfolded and aggregated proteins to the ClpC protease or to other proteins involved in proteolysis. This is Adapter protein MecA from Limosilactobacillus reuteri (strain DSM 20016) (Lactobacillus reuteri).